Consider the following 135-residue polypeptide: Ribonuclease P protein component (135 aa).

This sequence belongs to the RnpA family. In terms of assembly, consists of a catalytic RNA component (M1 or rnpB) and a protein subunit.

It carries out the reaction Endonucleolytic cleavage of RNA, removing 5'-extranucleotides from tRNA precursor.. Functionally, RNaseP catalyzes the removal of the 5'-leader sequence from pre-tRNA to produce the mature 5'-terminus. It can also cleave other RNA substrates such as 4.5S RNA. The protein component plays an auxiliary but essential role in vivo by binding to the 5'-leader sequence and broadening the substrate specificity of the ribozyme. This chain is Ribonuclease P protein component, found in Pseudomonas aeruginosa (strain ATCC 15692 / DSM 22644 / CIP 104116 / JCM 14847 / LMG 12228 / 1C / PRS 101 / PAO1).